A 188-amino-acid chain; its full sequence is Large ribosomal subunit protein bL35m (188 aa).

Belongs to the bacterial ribosomal protein bL35 family. As to quaternary structure, component of the mitochondrial large ribosomal subunit (mt-LSU). Mature mammalian 55S mitochondrial ribosomes consist of a small (28S) and a large (39S) subunit. The 28S small subunit contains a 12S ribosomal RNA (12S mt-rRNA) and 30 different proteins. The 39S large subunit contains a 16S rRNA (16S mt-rRNA), a copy of mitochondrial valine transfer RNA (mt-tRNA(Val)), which plays an integral structural role, and 52 different proteins.

It localises to the mitochondrion. The chain is Large ribosomal subunit protein bL35m (MRPL35) from Homo sapiens (Human).